The chain runs to 352 residues: Mitochondrial ubiquitin ligase activator of NFKB 1 (352 aa).

The Cytoplasmic portion of the chain corresponds to 1–8; the sequence is MESGSRPS. A helical transmembrane segment spans residues 9-29; the sequence is LGQVILLGTSSMVTAVLYSIY. The Mitochondrial intermembrane segment spans residues 30-238; that stretch reads RQKAQVAQEL…LLHRQESSVR (209 aa). A Glycyl lysine isopeptide (Lys-Gly) (interchain with G-Cter in ubiquitin) cross-link involves residue K52. A helical transmembrane segment spans residues 239 to 259; the sequence is LWKILVLVFGFATCATLFFIL. The Cytoplasmic segment spans residues 260 to 352; sequence RKQYLHRQER…ITRVIPLYNS (93 aa). Residue K299 forms a Glycyl lysine isopeptide (Lys-Gly) (interchain with G-Cter in ubiquitin) linkage. The RING-type zinc finger occupies 302–340; the sequence is CVVCLSNFKSCVFLECGHVCSCRQCYLALPEPKRCPICR.

Homooligomer. Interacts with MAP3K7/TAK1. Interacts with UBC9. Interacts with and sumoylates DNM1L. Interacts with MAVS. Interacts with TP53 (via N-terminus); the interaction leads to ubiquitination and proteasomal degradation of TP53. Ubiquitinated by PRKN during mitophagy, leading to its degradation and enhancement of mitophagy. Deubiquitinated by USP30. Expressed in cortical neurons (at protein level).

It localises to the mitochondrion outer membrane. Its subcellular location is the peroxisome. The catalysed reaction is S-ubiquitinyl-[E2 ubiquitin-conjugating enzyme]-L-cysteine + [acceptor protein]-L-lysine = [E2 ubiquitin-conjugating enzyme]-L-cysteine + N(6)-ubiquitinyl-[acceptor protein]-L-lysine.. Its pathway is protein modification; protein ubiquitination. It functions in the pathway protein modification; protein sumoylation. In terms of biological role, exhibits weak E3 ubiquitin-protein ligase activity. E3 ubiquitin ligases accept ubiquitin from an E2 ubiquitin-conjugating enzyme in the form of a thioester and then directly transfer the ubiquitin to targeted substrates. Can ubiquitinate AKT1 preferentially at 'Lys-284' involving 'Lys-48'-linked polyubiquitination and seems to be involved in regulation of Akt signaling by targeting phosphorylated Akt to proteasomal degradation. Mediates polyubiquitination of cytoplasmic TP53 at 'Lys-27' which targets TP53 for proteasomal degradation, thus reducing TP53 levels in the cytoplasm and mitochondrion. Proposed to preferentially act as a SUMO E3 ligase at physiological concentrations. Plays a role in the control of mitochondrial morphology by promoting mitochondrial fragmentation, and influences mitochondrial localization. Likely to promote mitochondrial fission through negatively regulating the mitochondrial fusion proteins MFN1 and MFN2, acting in a pathway that is parallel to the PRKN/PINK1 regulatory pathway. May also be involved in the sumoylation of the membrane fission protein DNM1L. Inhibits cell growth. When overexpressed, activates JNK through MAP3K7/TAK1 and induces caspase-dependent apoptosis. Involved in the modulation of innate immune defense against viruses by inhibiting RIGI-dependent antiviral response. Can mediate RIGI sumoylation and disrupt its polyubiquitination. The polypeptide is Mitochondrial ubiquitin ligase activator of NFKB 1 (Mul1) (Mus musculus (Mouse)).